We begin with the raw amino-acid sequence, 102 residues long: Large ribosomal subunit protein bL21 (102 aa).

The protein belongs to the bacterial ribosomal protein bL21 family. As to quaternary structure, part of the 50S ribosomal subunit. Contacts protein L20.

This protein binds to 23S rRNA in the presence of protein L20. The sequence is that of Large ribosomal subunit protein bL21 from Pelobacter propionicus (strain DSM 2379 / NBRC 103807 / OttBd1).